We begin with the raw amino-acid sequence, 295 residues long: ER-localized J domain-containing protein 5 (295 aa).

The first 20 residues, 1 to 20 (MNGYWKPALVVLGLVSLSYA), serve as a signal peptide directing secretion. Topologically, residues 21–130 (FTTIETEIFQ…GFYFSRMKPK (110 aa)) are lumenal. The region spanning 42-110 (DMNFYKFLKL…RKIYDYYLQN (69 aa)) is the J domain. A helical membrane pass occupies residues 131–151 (TWFLLAFIWIVVNIGQYIISI). At 152–295 (IQYRSQRSRI…PNGKVIYSRK (144 aa)) the chain is on the cytoplasmic side. The tract at residues 259–287 (KYDGNQTKKGNKVKKGSAKKGQKKMELPN) is disordered. Residues 267–280 (KGNKVKKGSAKKGQ) show a composition bias toward basic residues.

It belongs to the DnaJ family.

It is found in the endoplasmic reticulum membrane. In terms of biological role, dnaJ-like chaperone required for the folding capacity of the endoplasmic reticulum. The chain is ER-localized J domain-containing protein 5 (ERJ5) from Saccharomyces cerevisiae (strain ATCC 204508 / S288c) (Baker's yeast).